An 89-amino-acid polypeptide reads, in one-letter code: Peroxidase (89 aa).

His-52 serves as a coordination point for heme. Ca(2+)-binding residues include Thr-53 and Asp-68.

The cofactor is heme b. Ca(2+) serves as cofactor.

Its subcellular location is the secreted. It catalyses the reaction 2 a phenolic donor + H2O2 = 2 a phenolic radical donor + 2 H2O. Its function is as follows. Removal of H(2)O(2), oxidation of toxic reductants, biosynthesis and degradation of lignin, suberization, auxin catabolism, response to environmental stresses such as wounding, pathogen attack and oxidative stress. These functions might be dependent on each isozyme/isoform in each plant tissue. Active against p-coumaryl alcohol, coniferyl alcohol and coniferyl aldehyde. This chain is Peroxidase, found in Ginkgo biloba (Ginkgo).